An 89-amino-acid polypeptide reads, in one-letter code: Cytochrome b-c1 complex subunit 6, mitochondrial (89 aa).

A mitochondrion-targeting transit peptide spans 1–13 (MGLEDERKMLTGS). The tract at residues 1–27 (MGLEDERKMLTGSGDPKEEEEEELVDP) is disordered. 2 disulfide bridges follow: Cys35–Cys79 and Cys51–Cys65. Lys40 bears the N6-acetyllysine mark. N6-acetyllysine is present on Lys83.

The protein belongs to the UQCRH/QCR6 family. In terms of assembly, component of the ubiquinol-cytochrome c oxidoreductase (cytochrome b-c1 complex, complex III, CIII), a multisubunit enzyme composed of 11 subunits. The complex is composed of 3 respiratory subunits cytochrome b, cytochrome c1 and Rieske protein UQCRFS1, 2 core protein subunits UQCRC1/QCR1 and UQCRC2/QCR2, and 6 low-molecular weight protein subunits UQCRH/QCR6, UQCRB/QCR7, UQCRQ/QCR8, UQCR10/QCR9, UQCR11/QCR10 and subunit 9, the cleavage product of Rieske protein UQCRFS1. The complex exists as an obligatory dimer and forms supercomplexes (SCs) in the inner mitochondrial membrane with NADH-ubiquinone oxidoreductase (complex I, CI) and cytochrome c oxidase (complex IV, CIV), resulting in different assemblies (supercomplex SCI(1)III(2)IV(1) and megacomplex MCI(2)III(2)IV(2)).

The protein resides in the mitochondrion inner membrane. Functionally, component of the ubiquinol-cytochrome c oxidoreductase, a multisubunit transmembrane complex that is part of the mitochondrial electron transport chain which drives oxidative phosphorylation. The respiratory chain contains 3 multisubunit complexes succinate dehydrogenase (complex II, CII), ubiquinol-cytochrome c oxidoreductase (cytochrome b-c1 complex, complex III, CIII) and cytochrome c oxidase (complex IV, CIV), that cooperate to transfer electrons derived from NADH and succinate to molecular oxygen, creating an electrochemical gradient over the inner membrane that drives transmembrane transport and the ATP synthase. The cytochrome b-c1 complex catalyzes electron transfer from ubiquinol to cytochrome c, linking this redox reaction to translocation of protons across the mitochondrial inner membrane, with protons being carried across the membrane as hydrogens on the quinol. In the process called Q cycle, 2 protons are consumed from the matrix, 4 protons are released into the intermembrane space and 2 electrons are passed to cytochrome c. The polypeptide is Cytochrome b-c1 complex subunit 6, mitochondrial (Uqcrh) (Rattus norvegicus (Rat)).